The chain runs to 81 residues: Acyl carrier protein (81 aa).

One can recognise a Carrier domain in the interval 3 to 78 (QEIFEKVKSI…AAVDYIEKEQ (76 aa)). The residue at position 38 (S38) is an O-(pantetheine 4'-phosphoryl)serine.

Belongs to the acyl carrier protein (ACP) family. In terms of processing, 4'-phosphopantetheine is transferred from CoA to a specific serine of apo-ACP by AcpS. This modification is essential for activity because fatty acids are bound in thioester linkage to the sulfhydryl of the prosthetic group.

The protein localises to the cytoplasm. The protein operates within lipid metabolism; fatty acid biosynthesis. Its function is as follows. Carrier of the growing fatty acid chain in fatty acid biosynthesis. The polypeptide is Acyl carrier protein (Crocosphaera subtropica (strain ATCC 51142 / BH68) (Cyanothece sp. (strain ATCC 51142))).